We begin with the raw amino-acid sequence, 199 residues long: MASTENPDPETGKSEPIPASATPPPSSAASFLDCRKIDIITRVLLFSATLTALIVMVTSDQTEMTQLPGVSSPAPVSAEFNDSPAFIYFVVALVVASFYALISTLVSISLLLKPEFTAQFSIYLASLDMVMLGILASATGTAGGVAYIALKGNEEVGWNKICNVYDKFCRYIATSLALSLFASLLLLVLSIWSALSKRT.

Residues methionine 1 to serine 27 form a disordered region. Alanine 2 bears the N-acetylalanine mark. The Cytoplasmic portion of the chain corresponds to alanine 2 to lysine 36. A helical transmembrane segment spans residues isoleucine 37 to valine 57. Residues threonine 58–alanine 85 lie on the Extracellular side of the membrane. Residues phenylalanine 86–valine 106 traverse the membrane as a helical segment. At serine 107 to methionine 129 the chain is on the cytoplasmic side. Residues valine 130 to leucine 150 traverse the membrane as a helical segment. Residues lysine 151–tyrosine 171 are Extracellular-facing. Residues isoleucine 172–tryptophan 192 traverse the membrane as a helical segment. The Cytoplasmic segment spans residues serine 193–threonine 199.

It belongs to the Casparian strip membrane proteins (CASP) family. Homodimer and heterodimers. In terms of tissue distribution, expressed in the root endodermis and flowers.

The protein resides in the cell membrane. In Arabidopsis thaliana (Mouse-ear cress), this protein is CASP-like protein 1D2.